Reading from the N-terminus, the 131-residue chain is Profilin-1 (131 aa).

This sequence belongs to the profilin family. As to quaternary structure, occurs in many kinds of cells as a complex with monomeric actin in a 1:1 ratio. In terms of tissue distribution, cytoplasmic distribution in hypocotyls. In root nodules, it is found in all cells, but is more abundant in the vascular tissue as well as the endodermis.

It is found in the cytoplasm. It localises to the cytoskeleton. Its function is as follows. Binds to actin and affects the structure of the cytoskeleton. At high concentrations, profilin prevents the polymerization of actin, whereas it enhances it at low concentrations. By binding to PIP2, it inhibits the formation of IP3 and DG. The chain is Profilin-1 from Phaseolus vulgaris (Kidney bean).